Consider the following 484-residue polypeptide: Protein nucleotidyltransferase YdiU (484 aa).

Positions 81, 83, 84, 103, 115, 116, 166, and 173 each coordinate ATP. The Proton acceptor role is filled by aspartate 244. Mg(2+) contacts are provided by asparagine 245 and aspartate 254. Position 254 (aspartate 254) interacts with ATP.

Belongs to the SELO family. It depends on Mg(2+) as a cofactor. Requires Mn(2+) as cofactor.

It catalyses the reaction L-seryl-[protein] + ATP = 3-O-(5'-adenylyl)-L-seryl-[protein] + diphosphate. It carries out the reaction L-threonyl-[protein] + ATP = 3-O-(5'-adenylyl)-L-threonyl-[protein] + diphosphate. The catalysed reaction is L-tyrosyl-[protein] + ATP = O-(5'-adenylyl)-L-tyrosyl-[protein] + diphosphate. The enzyme catalyses L-histidyl-[protein] + UTP = N(tele)-(5'-uridylyl)-L-histidyl-[protein] + diphosphate. It catalyses the reaction L-seryl-[protein] + UTP = O-(5'-uridylyl)-L-seryl-[protein] + diphosphate. It carries out the reaction L-tyrosyl-[protein] + UTP = O-(5'-uridylyl)-L-tyrosyl-[protein] + diphosphate. Its function is as follows. Nucleotidyltransferase involved in the post-translational modification of proteins. It can catalyze the addition of adenosine monophosphate (AMP) or uridine monophosphate (UMP) to a protein, resulting in modifications known as AMPylation and UMPylation. This Shewanella baltica (strain OS223) protein is Protein nucleotidyltransferase YdiU.